We begin with the raw amino-acid sequence, 252 residues long: MRIDILSLFPDMFDATLGQSIVGRAQDDGFVDIKVTDFRQYTTDKHRHVDDAPFGGGAGMLLQAQPIFDAMDAIEQETKDTYPKGRVILMDPAGRRFDQDFAMELAQEEHLTFICGHYEGYDERIRQLVTDEASLGDYVLTGGELAAMVMVDATVRFVPGVLGNMSSPMGDSFSNGLLEYPQYTRPADFRGMKVPEVLTSGNHEKIREWRMRESLKRTLERRPDLLKNAKLSREQQIILQDLKLDLDPDAPK.

Residues Gly116 and 135–140 each bind S-adenosyl-L-methionine; that span reads LGDYVL.

This sequence belongs to the RNA methyltransferase TrmD family. In terms of assembly, homodimer.

It localises to the cytoplasm. It carries out the reaction guanosine(37) in tRNA + S-adenosyl-L-methionine = N(1)-methylguanosine(37) in tRNA + S-adenosyl-L-homocysteine + H(+). Its function is as follows. Specifically methylates guanosine-37 in various tRNAs. This chain is tRNA (guanine-N(1)-)-methyltransferase, found in Limosilactobacillus fermentum (strain NBRC 3956 / LMG 18251) (Lactobacillus fermentum).